The following is a 279-amino-acid chain: MTNIHPTAIIEPGAKIGRNVVIEPYVVIKSTVTLCDDVVVKSYAYIDGYTTIGRGTTIWPSAMIGNKPQDLKYQGEKTYVTIGENCEIREFAIITSSTFEGTTVSIGNNCLIMPWAHVAHNCTIGNHVVLSNHAQLAGHVVVEDYAIIGGMVGVHQFVRIGAHAMVGALSGVRRDVPPYTIGTGNPYQLGGINKVGLQRRQVGFEIRLALIKVFKKVYRSEDGFFEALLEAQEEYGHIPEVQNFIHFCRNPSKRGIERGAAKEAFQEESVDKEGALVES.

The disordered stretch occupies residues 260–279; that stretch reads AAKEAFQEESVDKEGALVES.

It belongs to the transferase hexapeptide repeat family. LpxA subfamily. Homotrimer.

It localises to the cytoplasm. It carries out the reaction a (3R)-hydroxyacyl-[ACP] + UDP-N-acetyl-alpha-D-glucosamine = a UDP-3-O-[(3R)-3-hydroxyacyl]-N-acetyl-alpha-D-glucosamine + holo-[ACP]. The protein operates within glycolipid biosynthesis; lipid IV(A) biosynthesis; lipid IV(A) from (3R)-3-hydroxytetradecanoyl-[acyl-carrier-protein] and UDP-N-acetyl-alpha-D-glucosamine: step 1/6. In terms of biological role, involved in the biosynthesis of lipid A, a phosphorylated glycolipid that anchors the lipopolysaccharide to the outer membrane of the cell. This chain is Acyl-[acyl-carrier-protein]--UDP-N-acetylglucosamine O-acyltransferase, found in Chlamydia abortus (strain DSM 27085 / S26/3) (Chlamydophila abortus).